Reading from the N-terminus, the 210-residue chain is Na(+)-translocating NADH-quinone reductase subunit D (210 aa).

The next 6 helical transmembrane spans lie at 14 to 34 (PIVN…ALAV), 42 to 62 (LVMA…ISMI), 72 to 92 (IIVQ…LLQA), 103 to 123 (VFVG…AYAM), 131 to 151 (FMDG…VGFV), and 178 to 198 (NGLL…IWII).

Belongs to the NqrDE/RnfAE family. As to quaternary structure, composed of six subunits; NqrA, NqrB, NqrC, NqrD, NqrE and NqrF.

Its subcellular location is the cell inner membrane. The enzyme catalyses a ubiquinone + n Na(+)(in) + NADH + H(+) = a ubiquinol + n Na(+)(out) + NAD(+). In terms of biological role, NQR complex catalyzes the reduction of ubiquinone-1 to ubiquinol by two successive reactions, coupled with the transport of Na(+) ions from the cytoplasm to the periplasm. NqrA to NqrE are probably involved in the second step, the conversion of ubisemiquinone to ubiquinol. In Shewanella oneidensis (strain ATCC 700550 / JCM 31522 / CIP 106686 / LMG 19005 / NCIMB 14063 / MR-1), this protein is Na(+)-translocating NADH-quinone reductase subunit D.